We begin with the raw amino-acid sequence, 111 residues long: Universal stress protein B (111 aa).

2 helical membrane-spanning segments follow: residues 1–21 and 90–110; these read MIST…NMAR and FILT…LMIW.

The protein belongs to the universal stress protein B family.

It localises to the cell inner membrane. The protein is Universal stress protein B of Escherichia coli O45:K1 (strain S88 / ExPEC).